The following is a 303-amino-acid chain: Bifunctional protein FolD (303 aa).

Residues 165–167, Ser-190, and Ile-231 each bind NADP(+); that span reads GRS.

Belongs to the tetrahydrofolate dehydrogenase/cyclohydrolase family. As to quaternary structure, homodimer.

The catalysed reaction is (6R)-5,10-methylene-5,6,7,8-tetrahydrofolate + NADP(+) = (6R)-5,10-methenyltetrahydrofolate + NADPH. It catalyses the reaction (6R)-5,10-methenyltetrahydrofolate + H2O = (6R)-10-formyltetrahydrofolate + H(+). Its pathway is one-carbon metabolism; tetrahydrofolate interconversion. Catalyzes the oxidation of 5,10-methylenetetrahydrofolate to 5,10-methenyltetrahydrofolate and then the hydrolysis of 5,10-methenyltetrahydrofolate to 10-formyltetrahydrofolate. The sequence is that of Bifunctional protein FolD from Prochlorococcus marinus (strain NATL1A).